A 302-amino-acid chain; its full sequence is Mitochondrial glycine transporter (302 aa).

Solcar repeat units follow at residues 22 to 112 (HPVF…LKHH), 119 to 203 (PKPL…AKKL), and 213 to 297 (FSPV…MMEK). Transmembrane regions (helical) follow at residues 28-53 (FVCG…TRIQ), 87-113 (GVSP…KHHF), 125-150 (VMLG…TRYE), 178-201 (GLTA…TRAK), 217-243 (LNFS…KTHM), and 272-290 (GGVP…AWTV).

This sequence belongs to the mitochondrial carrier (TC 2.A.29) family. SLC25A38 subfamily.

It localises to the mitochondrion inner membrane. The catalysed reaction is glycine(in) = glycine(out). Functionally, mitochondrial glycine transporter that imports glycine into the mitochondrial matrix. Plays an important role in providing glycine for the first enzymatic step in heme biosynthesis, the condensation of glycine with succinyl-CoA to produce 5-aminolevulinate (ALA) in the mitochondrial matrix. Required during erythropoiesis. In terms of biological role, may play a role as pro-apoptotic protein that induces caspase-dependent apoptosis. This is Mitochondrial glycine transporter from Xenopus laevis (African clawed frog).